The following is a 152-amino-acid chain: Syntaxin-8A (152 aa).

Residues 1 to 14 (MNNNNNFNSNFNSN) are compositionally biased toward low complexity. A disordered region spans residues 1-22 (MNNNNNFNSNFNSNRISSTQPY). Topologically, residues 1-131 (MNNNNNFNSN…LTQQSKTTGY (131 aa)) are cytoplasmic. The t-SNARE coiled-coil homology domain maps to 60–122 (KRDMEEQDKM…RNTTKNLITL (63 aa)). A helical; Anchor for type IV membrane protein transmembrane segment spans residues 132–152 (CSAICFLLLVLLVIIILASVL).

It belongs to the syntaxin family. As to quaternary structure, component of the SNARE complex composed of syn7A, syn8A, vamp7A and vti1A.

The protein resides in the endosome membrane. Functionally, involved in the targeting and/or fusion of transport vesicles to their target membrane during transport of proteins from the early endosome to the lysosome. Required for fusion of late endosomes with lysosomes and homotypic lysosomal fusion. The polypeptide is Syntaxin-8A (Dictyostelium discoideum (Social amoeba)).